A 313-amino-acid chain; its full sequence is Inner membrane ABC transporter permease protein YdcU (313 aa).

Over 1–25 the chain is Cytoplasmic; it reads MAMNVLQSPSRPGLGKVSGFFWHNP. Residues 26–46 form a helical membrane-spanning segment; sequence GLGLFLLLLGPLMWFGIVYFG. The Periplasmic segment spans residues 47–92; sequence SLLTLLWQGFYTFDDFTMSVTPELTLANIRALFNPANYDIILRTLT. The ABC transmembrane type-1 domain maps to 87 to 302; sequence ILRTLTMAVA…PIILIALYLA (216 aa). A helical transmembrane segment spans residues 93–113; that stretch reads MAVAVTIASAILAFPMAWYMA. Topologically, residues 114–122 are cytoplasmic; sequence RYTSGKMKA. Residues 123-143 form a helical membrane-spanning segment; the sequence is FFYIAVMLPMWASYIVKAYAW. The Periplasmic portion of the chain corresponds to 144–154; that stretch reads TLLLAKDGVAQ. The helical transmembrane segment at 155 to 175 threads the bilayer; it reads WFLQHLGLEPLLTAFLTLPAV. The Cytoplasmic segment spans residues 176 to 187; sequence GGNTLSTSGLGR. Residues 188 to 208 traverse the membrane as a helical segment; that stretch reads FLVFLYIWLPFMILPVQAALE. Over 209–230 the chain is Periplasmic; the sequence is RLPPSLLQASADLGARPRQTFR. Residues 231 to 251 form a helical membrane-spanning segment; that stretch reads YVVLPLAIPGIAAGSIFTFSL. Position 252 (threonine 252) is a topological domain, cytoplasmic. A helical transmembrane segment spans residues 253–273; that stretch reads LGDFIVPQLVGPPGYFIGNMV. At 274 to 283 the chain is on the periplasmic side; the sequence is YSQQGAIGNM. Residues 284-304 form a helical membrane-spanning segment; it reads PMAAAFTLVPIILIALYLAFV. Over 305–313 the chain is Cytoplasmic; the sequence is KRLGAFDAL.

This sequence belongs to the binding-protein-dependent transport system permease family. CysTW subfamily.

The protein localises to the cell inner membrane. Probably part of the ABC transporter complex YdcSTUV. Probably responsible for the translocation of the substrate across the membrane. The chain is Inner membrane ABC transporter permease protein YdcU (ydcU) from Escherichia coli (strain K12).